Here is a 165-residue protein sequence, read N- to C-terminus: Large ribosomal subunit protein uL15 (165 aa).

Over residues 1-30 (MTNKKRRQRGSRTHGGGTHKNRRGAGHRGG) the composition is skewed to basic residues. Disordered regions lie at residues 1–39 (MTNK…RAKH) and 137–165 (AGGE…DDEA). The segment covering 150–165 (AADESENTSDDEDDEA) has biased composition (acidic residues).

This sequence belongs to the universal ribosomal protein uL15 family. In terms of assembly, part of the 50S ribosomal subunit.

In terms of biological role, binds to the 23S rRNA. This chain is Large ribosomal subunit protein uL15, found in Halorubrum lacusprofundi (strain ATCC 49239 / DSM 5036 / JCM 8891 / ACAM 34).